We begin with the raw amino-acid sequence, 604 residues long: Phenylalanine--tRNA ligase beta subunit (604 aa).

The region spanning 327-402 (YFQEKREVAH…LGRTLDRFSP (76 aa)) is the B5 domain. Asp-380, Asp-386, Glu-389, and Glu-390 together coordinate Mg(2+).

Belongs to the phenylalanyl-tRNA synthetase beta subunit family. Type 2 subfamily. Tetramer of two alpha and two beta subunits. It depends on Mg(2+) as a cofactor.

Its subcellular location is the cytoplasm. It carries out the reaction tRNA(Phe) + L-phenylalanine + ATP = L-phenylalanyl-tRNA(Phe) + AMP + diphosphate + H(+). This is Phenylalanine--tRNA ligase beta subunit from Treponema pallidum subsp. pallidum (strain SS14).